Here is a 391-residue protein sequence, read N- to C-terminus: Flagellin (391 aa).

This sequence belongs to the bacterial flagellin family.

Its subcellular location is the secreted. The protein localises to the bacterial flagellum. Its function is as follows. Flagellin is the subunit protein which polymerizes to form the filaments of bacterial flagella. This Bordetella bronchiseptica (strain ATCC BAA-588 / NCTC 13252 / RB50) (Alcaligenes bronchisepticus) protein is Flagellin (flaA).